A 103-amino-acid chain; its full sequence is Translation initiation factor 1A (103 aa).

An S1-like domain is found at Thr-11 to Thr-86.

The protein belongs to the eIF-1A family.

Its function is as follows. Seems to be required for maximal rate of protein biosynthesis. Enhances ribosome dissociation into subunits and stabilizes the binding of the initiator Met-tRNA(I) to 40 S ribosomal subunits. The polypeptide is Translation initiation factor 1A (eIF1A) (Methanococcus maripaludis (strain C5 / ATCC BAA-1333)).